Consider the following 508-residue polypeptide: Kinesin light chain 3 (508 aa).

A disordered region spans residues 1 to 20; it reads MSVQVAAPGSTGLGPERLNP. Residues 88–150 adopt a coiled-coil conformation; sequence LLALSAHVSV…EEEKSHLQFL (63 aa). A disordered region spans residues 154–197; sequence RQYDPPEESQRPESPPRRDSLASLFPSEEEEKKGPEAAGAAAAQ. The span at 161–173 shows a compositional bias: basic and acidic residues; that stretch reads ESQRPESPPRRDS. At serine 173 the chain carries Phosphoserine. TPR repeat units follow at residues 207–240, 249–282, 291–324, 333–366, and 375–408; these read LRTL…LERS, ATML…REQT, AATL…REKV, AKQL…YEAL, and AKTK…EALP. The tract at residues 409-441 is disordered; sequence APLGAPQGGTAGDTQQQVLRRSSSFSKLRESIR. Residues 420-434 are compositionally biased toward polar residues; that stretch reads GDTQQQVLRRSSSFS. Serine 467 bears the Phosphoserine mark. Positions 486–508 are disordered; the sequence is LSTRHLSEAPRTLSISTQDLSPR. Over residues 498-508 the composition is skewed to polar residues; sequence LSISTQDLSPR. At threonine 502 the chain carries Phosphothreonine. Serine 506 carries the phosphoserine modification.

It belongs to the kinesin light chain family. In terms of assembly, oligomer composed of two heavy chains and two light chains. Associates with microtubulin in an ATP-dependent manner. Interacts with KIF5C. Interacts with ODF1. Interacts with LRGUK. Interacts with VDAC2. As to expression, expressed in postmeiotic male germ cells (at protein level). Expressed in the testes (at protein level). Expressed in spleen, intestine, brain and ovary.

It localises to the cytoplasm. It is found in the cytoskeleton. Its subcellular location is the mitochondrion. In terms of biological role, kinesin is a microtubule-associated force-producing protein that may play a role in organelle transport. Plays a role during spermiogenesis in the development of the sperm tail midpiece and in the normal function of spermatozoa. May play a role in the formation of the mitochondrial sheath formation in the developing spermatid midpiece. The protein is Kinesin light chain 3 (Klc3) of Mus musculus (Mouse).